A 410-amino-acid polypeptide reads, in one-letter code: Arginine deiminase (410 aa).

Cysteine 399 serves as the catalytic Amidino-cysteine intermediate.

The protein belongs to the arginine deiminase family.

The protein resides in the cytoplasm. It catalyses the reaction L-arginine + H2O = L-citrulline + NH4(+). Its pathway is amino-acid degradation; L-arginine degradation via ADI pathway; carbamoyl phosphate from L-arginine: step 1/2. This is Arginine deiminase from Treponema denticola (strain ATCC 35405 / DSM 14222 / CIP 103919 / JCM 8153 / KCTC 15104).